Reading from the N-terminus, the 219-residue chain is Cytidylate kinase (219 aa).

ATP is bound at residue 11-19 (GPAGVGKTT).

This sequence belongs to the cytidylate kinase family. Type 1 subfamily.

It is found in the cytoplasm. It carries out the reaction CMP + ATP = CDP + ADP. The enzyme catalyses dCMP + ATP = dCDP + ADP. The sequence is that of Cytidylate kinase from Oleidesulfovibrio alaskensis (strain ATCC BAA-1058 / DSM 17464 / G20) (Desulfovibrio alaskensis).